We begin with the raw amino-acid sequence, 279 residues long: Thymidylate synthase 1 (279 aa).

Residue 141 to 142 coordinates dUMP; the sequence is RR. Cysteine 161 acts as the Nucleophile in catalysis. Residues 181 to 184, asparagine 192, and 222 to 224 contribute to the dUMP site; these read RSND and HVY. Aspartate 184 is a (6R)-5,10-methylene-5,6,7,8-tetrahydrofolate binding site. Alanine 278 contacts (6R)-5,10-methylene-5,6,7,8-tetrahydrofolate.

Belongs to the thymidylate synthase family. Bacterial-type ThyA subfamily. In terms of assembly, homodimer.

The protein localises to the cytoplasm. It carries out the reaction dUMP + (6R)-5,10-methylene-5,6,7,8-tetrahydrofolate = 7,8-dihydrofolate + dTMP. It participates in pyrimidine metabolism; dTTP biosynthesis. In terms of biological role, catalyzes the reductive methylation of 2'-deoxyuridine-5'-monophosphate (dUMP) to 2'-deoxythymidine-5'-monophosphate (dTMP) while utilizing 5,10-methylenetetrahydrofolate (mTHF) as the methyl donor and reductant in the reaction, yielding dihydrofolate (DHF) as a by-product. This enzymatic reaction provides an intracellular de novo source of dTMP, an essential precursor for DNA biosynthesis. The chain is Thymidylate synthase 1 from Bacillus subtilis (strain 168).